A 154-amino-acid polypeptide reads, in one-letter code: Snaclec EMS16 subunit beta (154 aa).

A signal peptide spans 1–26 (MGRLISVRFSLLVVFLSLSGIGAGLC). Cys-27 and Cys-38 form a disulfide bridge. The C-type lectin domain maps to 34-147 (FDQHCYKVFE…CEKSVSFVCK (114 aa)). Residue Asn-47 is glycosylated (N-linked (GlcNAc...) asparagine). 2 disulfide bridges follow: Cys-55-Cys-146 and Cys-121-Cys-138.

Belongs to the snaclec family. As to quaternary structure, heterodimer of subunits A and B; disulfide-linked. Expressed by the venom gland.

The protein resides in the secreted. EMS16 is a potent and selective inhibitor of alpha-2/beta-1 (ITGA2/ITGB1) integrin and acts as a potent antagonist of platelet aggregation and cell migration. Binds specifically to the I domain of the alpha-2 subunit, in a metal ion-independent fashion. The protein is Snaclec EMS16 subunit beta of Echis multisquamatus (Central Asian sand viper).